A 1389-amino-acid chain; its full sequence is CRISPR-associated endoribonuclease Cas13a (1389 aa).

An NTD region spans residues 1-347 (MGNLFGHKRW…DKHEKFKIER (347 aa)). Arg219 serves as a coordination point for crRNA. Binds crRNA stretches follow at residues 330–342 (YIKSYVLLDKHEK), 405–408 (KKHY), and 432–436 (YRYLK). The tract at residues 348–498 (ENKKDKIVKF…KLRHNDIDMT (151 aa)) is helical-1. Active-site for pre-crRNA processing residues include Arg438 and Lys441. Lys441 lines the crRNA pocket. Residues 471–475 (KILKR) form a binds crRNA region. Lys489 contacts crRNA. Residues 499–636 (TVNTDDFSRL…LKISDEEVSK (138 aa)) are HEPN-like fold 1-I. Positions 502 to 509 (TDDFSRLH) are binds crRNA. Residues Arg597 and His602 each act as for target ssRNA cleavage in the active site. Residues 637-828 (ALNLDVVFKD…ERITVKTSDK (192 aa)) are helical-2. Gln759 provides a ligand contact to crRNA. Positions 829-899 (TIVINDDFEY…ECITENWNLN (71 aa)) are HEPN-like fold 1-II. Residues 853 to 858 (NKIRNR) form a binds crRNA region. Trp865 serves as a coordination point for crRNA. Coiled coils occupy residues 893–920 (TENWNLNLEEFIQKMKEIEKDFDDFKIQ), 968–1046 (EIDK…FQEI), and 1101–1131 (KNKISEIDAILKNLNDKLNGYSKEYKEKYIK). The tract at residues 900–1170 (LEEFIQKMKE…EYKKIRDLVE (271 aa)) is linker. The tract at residues 1170-1290 (EFNYLNKIES…ISHFYIVRNP (121 aa)) is HEPN-like fold 2. Catalysis depends on for target ssRNA cleavage residues Arg1278 and His1283. 2 binds crRNA regions span residues 1311–1316 (TRYNNS) and 1338–1339 (KK).

This sequence belongs to the CRISPR-associated endoribonuclease Cas13a family. Monomer. Mg(2+) serves as cofactor.

RNase activity on target is decreased by EDTA. Target RNA acts as an activator for non-specific ssRNA degradation. CRISPR (clustered regularly interspaced short palindromic repeat), is an adaptive immune system that provides protection against mobile genetic elements (viruses, transposable elements and conjugative plasmids). CRISPR clusters contain sequences complementary to antecedent mobile elements (spacers) and target invading nucleic acids. Unlike many single-component effectors, this CRISPR-Cas system targets RNA. CRISPR clusters are transcribed from pre-CRISPR RNA (crRNA) and processed into crRNA (optimally 28 nucleotides in this system) by this protein. This protein processes pre-crRNA at a 'non-typical' site 1 nucleotide upstream of the pre-crRNA stem-loop; it cleaves pre-crRNA from L.buccalis and L.wadei in a similar fashion, whereas the enzymes from the latter 2 bacteria cleave their own pre-crRNA 3 nt further upstream. When the appropriate target sequences are cloned into the CRISPR array, confers immunity to ssRNA(+) enterobacteria phage MS2. Cleaves linear target ssRNA in a crRNA-dependent fashion, preferentially before U residues; has no activity on partially dsRNA, ssDNA or dsDNA. RNA secondary structure surrounding the target influence the cleavage site and efficiency; unlike other CRISPR-Cas effectors Cas13a cleaves outside of the crRNA binding site. In the presence of a viable RNA target other RNAs are also degraded (called collateral RNA degradation), suggesting this type of CRISPR-Cas might also prevent viral spread by inducing programmed cell death or dormancy. This system has a 3' protospacer flanking site (PFS), it does not cleave when the 3' PFS is G (PFS is equivalent to PAM, the protospacer adjacent motif). Mutations of its active site residues results in an RNA-programmed RNA-binding protein. This chain is CRISPR-associated endoribonuclease Cas13a, found in Leptotrichia shahii (strain DSM 19757 / CCUG 47503 / CIP 107916 / JCM 16776 / LB37).